The primary structure comprises 419 residues: Protein translocase subunit SecY (419 aa).

10 consecutive transmembrane segments (helical) span residues 19-39 (IMIL…ITEV), 64-84 (VISI…AVQF), 113-133 (ILTV…LRSF), 143-163 (FVVA…SEVI), 167-189 (GIGN…FLIN), 202-222 (SNLY…FSTL), 255-275 (FGQA…FLTT), 299-319 (IFYF…YTLI), 359-379 (FVGS…AAAL), and 380-400 (GVHP…SIIN).

This sequence belongs to the SecY/SEC61-alpha family. Component of the plastid Sec protein translocase complex, which is composed of at least SecY and SecE.

The protein resides in the plastid. It is found in the chloroplast thylakoid membrane. Its function is as follows. The central subunit of the protein translocation channel SecYE. Consists of two halves formed by TMs 1-5 and 6-10. These two domains form a lateral gate at the front which open onto the bilayer between TMs 2 and 7, and are clamped together by SecE at the back. The channel is closed by both a pore ring composed of hydrophobic SecY resides and a short helix (helix 2A) on the extracellular side of the membrane which forms a plug. This chain is Protein translocase subunit SecY, found in Diacronema lutheri (Unicellular marine alga).